The following is a 544-amino-acid chain: Chaperonin GroEL (544 aa).

Residues threonine 30–proline 33, lysine 51, aspartate 87–threonine 91, glycine 415, asparagine 479–alanine 481, and aspartate 495 contribute to the ATP site.

This sequence belongs to the chaperonin (HSP60) family. As to quaternary structure, forms a cylinder of 14 subunits composed of two heptameric rings stacked back-to-back. Interacts with the co-chaperonin GroES.

It localises to the cytoplasm. The enzyme catalyses ATP + H2O + a folded polypeptide = ADP + phosphate + an unfolded polypeptide.. Together with its co-chaperonin GroES, plays an essential role in assisting protein folding. The GroEL-GroES system forms a nano-cage that allows encapsulation of the non-native substrate proteins and provides a physical environment optimized to promote and accelerate protein folding. The protein is Chaperonin GroEL of Francisella tularensis subsp. mediasiatica (strain FSC147).